The primary structure comprises 226 residues: Flagellar L-ring protein (226 aa).

A signal peptide spans 1–15 (MRILGLSAALLILGG). Residue Cys16 is the site of N-palmitoyl cysteine attachment. A lipid anchor (S-diacylglycerol cysteine) is attached at Cys16.

It belongs to the FlgH family. The basal body constitutes a major portion of the flagellar organelle and consists of four rings (L,P,S, and M) mounted on a central rod.

It localises to the cell outer membrane. Its subcellular location is the bacterial flagellum basal body. Functionally, assembles around the rod to form the L-ring and probably protects the motor/basal body from shearing forces during rotation. The protein is Flagellar L-ring protein of Alteromonas mediterranea (strain DSM 17117 / CIP 110805 / LMG 28347 / Deep ecotype).